The following is a 241-amino-acid chain: MNSSHESLADVLVKICGIKRPEDAILADKLGADLLGLIHVERSPRHLTGRELEDILSLIPPEKAVIVLEPSDPVEVAEVIERTGVERVQLHSISCEDARGIKRVLTENGFNPGITVAVPPEPGSLDVLDHIPCSCVMLDSSSGGRTGGTGRMIPPELALGMLRLIRSHESAPEVALAGGLGPSTVRLNPEYLLEFDCLDFNSGIEAAPGIKDHAMMFELMEYMGRTGGLQKPSRLQRGELS.

It belongs to the TrpF family.

The catalysed reaction is N-(5-phospho-beta-D-ribosyl)anthranilate = 1-(2-carboxyphenylamino)-1-deoxy-D-ribulose 5-phosphate. The protein operates within amino-acid biosynthesis; L-tryptophan biosynthesis; L-tryptophan from chorismate: step 3/5. This Methanothermobacter thermautotrophicus (strain ATCC 29096 / DSM 1053 / JCM 10044 / NBRC 100330 / Delta H) (Methanobacterium thermoautotrophicum) protein is N-(5'-phosphoribosyl)anthranilate isomerase (trpF).